Reading from the N-terminus, the 255-residue chain is Ribosome maturation factor RimP (255 aa).

The tract at residues 177-255 (LRRGSAPPQD…ARLKNRDTLH (79 aa)) is disordered. Positions 186-202 (DGEDVDEEAGEAPEDEV) are enriched in acidic residues. A compositionally biased stretch (basic and acidic residues) spans 216–230 (PKMDKKSDKKSDKPV).

It belongs to the RimP family.

The protein localises to the cytoplasm. In terms of biological role, required for maturation of 30S ribosomal subunits. This chain is Ribosome maturation factor RimP, found in Methylorubrum populi (strain ATCC BAA-705 / NCIMB 13946 / BJ001) (Methylobacterium populi).